We begin with the raw amino-acid sequence, 337 residues long: Glyceraldehyde-3-phosphate dehydrogenase 1, cytosolic (337 aa).

Positions 1 to 151 (MGKIKIGING…YTSDVNIVSN (151 aa)) are binding to NAD. NAD(+) contacts are provided by residues 13–14 (RI), D35, and R82. Residues 152 to 337 (ASCTTNCLAP…DLIRHMFKTQ (186 aa)) are catalytic. D-glyceraldehyde 3-phosphate is bound by residues 153–155 (SCT), T184, 213–214 (TG), and R236. Catalysis depends on C154, which acts as the Nucleophile. N318 serves as a coordination point for NAD(+).

It belongs to the glyceraldehyde-3-phosphate dehydrogenase family. In terms of assembly, homotetramer.

The protein localises to the cytoplasm. The enzyme catalyses D-glyceraldehyde 3-phosphate + phosphate + NAD(+) = (2R)-3-phospho-glyceroyl phosphate + NADH + H(+). Its pathway is carbohydrate degradation; glycolysis; pyruvate from D-glyceraldehyde 3-phosphate: step 1/5. Key enzyme in glycolysis that catalyzes the first step of the pathway by converting D-glyceraldehyde 3-phosphate (G3P) into 3-phospho-D-glyceroyl phosphate. Essential for the maintenance of cellular ATP levels and carbohydrate metabolism. This Zea mays (Maize) protein is Glyceraldehyde-3-phosphate dehydrogenase 1, cytosolic (GAPC1).